The sequence spans 314 residues: Methionyl-tRNA formyltransferase (314 aa).

110-113 (SLLP) serves as a coordination point for (6S)-5,6,7,8-tetrahydrofolate.

The protein belongs to the Fmt family.

It catalyses the reaction L-methionyl-tRNA(fMet) + (6R)-10-formyltetrahydrofolate = N-formyl-L-methionyl-tRNA(fMet) + (6S)-5,6,7,8-tetrahydrofolate + H(+). Attaches a formyl group to the free amino group of methionyl-tRNA(fMet). The formyl group appears to play a dual role in the initiator identity of N-formylmethionyl-tRNA by promoting its recognition by IF2 and preventing the misappropriation of this tRNA by the elongation apparatus. The protein is Methionyl-tRNA formyltransferase of Lactobacillus johnsonii (strain CNCM I-12250 / La1 / NCC 533).